Consider the following 315-residue polypeptide: uncharacterized protein (315 aa).

Residues 1-38 lie on the Cytoplasmic side of the membrane; the sequence is MDVLLSLPQPELFKTTVIPFLANRNIIKSEAILSNLHS. The chain crosses the membrane as a helical span at residues 39–59; that stretch reads IFYVAIFYHIWFLFGKWILFP. Residues 60-101 lie on the Lumenal side of the membrane; the sequence is HLVKWKLDYDQKHNVKKDEKTTSERQAQHYKKKYTSLINQSS. In terms of domain architecture, TLC spans 95–302; that stretch reads SLINQSSVHL…MVSVAAKVLK (208 aa). Residues 102-122 traverse the membrane as a helical segment; sequence VHLISLLQSIVVLYYSLKFLL. The Cytoplasmic portion of the chain corresponds to 123–144; the sequence is DPKASAEPYQTSHSRVFTENRD. A helical membrane pass occupies residues 145–165; it reads TQVICIFAIGYFVWDIYISTM. The Lumenal segment spans residues 166 to 170; sequence YSTFP. Residues 171–190 form a helical membrane-spanning segment; sequence FVVHGIISTVVFCIGLKPYI. The Cytoplasmic segment spans residues 191–225; the sequence is QYYAPVFLMFELSNPSLNFRWFGIKFLPQKSKFCS. Residues 226-246 form a helical membrane-spanning segment; the sequence is LLLLLNNLTLMVVFFAARIAW. Topologically, residues 247–264 are lumenal; it reads GWFQIGKLCYDFYQVRNE. The helical transmembrane segment at 265-285 threads the bilayer; the sequence is PGFLVFDTIVILAGNFVLDIL. Residues 286 to 315 lie on the Cytoplasmic side of the membrane; the sequence is NVIWFSTMVSVAAKVLKKGESVDKVTKNEQ.

The protein localises to the endoplasmic reticulum membrane. This is an uncharacterized protein from Saccharomyces cerevisiae (strain ATCC 204508 / S288c) (Baker's yeast).